The chain runs to 316 residues: Probable cell division protein WhiA (316 aa).

Positions 275 to 309 form a DNA-binding region, H-T-H motif; the sequence is TLKELGEMVSSGKISKSGINHRLRKLDEIAEQLRS.

It belongs to the WhiA family.

Its function is as follows. Involved in cell division and chromosome segregation. The sequence is that of Probable cell division protein WhiA from Bacillus licheniformis (strain ATCC 14580 / DSM 13 / JCM 2505 / CCUG 7422 / NBRC 12200 / NCIMB 9375 / NCTC 10341 / NRRL NRS-1264 / Gibson 46).